The following is a 278-amino-acid chain: 4-deoxy-L-threo-5-hexosulose-uronate ketol-isomerase (278 aa).

The Zn(2+) site is built by H196, H198, E203, and H245.

The protein belongs to the KduI family. It depends on Zn(2+) as a cofactor.

The catalysed reaction is 5-dehydro-4-deoxy-D-glucuronate = 3-deoxy-D-glycero-2,5-hexodiulosonate. The protein operates within glycan metabolism; pectin degradation; 2-dehydro-3-deoxy-D-gluconate from pectin: step 4/5. Catalyzes the isomerization of 5-dehydro-4-deoxy-D-glucuronate to 3-deoxy-D-glycero-2,5-hexodiulosonate. The polypeptide is 4-deoxy-L-threo-5-hexosulose-uronate ketol-isomerase (Burkholderia cenocepacia (strain ATCC BAA-245 / DSM 16553 / LMG 16656 / NCTC 13227 / J2315 / CF5610) (Burkholderia cepacia (strain J2315))).